We begin with the raw amino-acid sequence, 376 residues long: Queuine tRNA-ribosyltransferase (376 aa).

Catalysis depends on Asp-93, which acts as the Proton acceptor. Residues 93–97 (DSGGF), Asp-147, Gln-190, and Gly-217 contribute to the substrate site. The interval 248–254 (GVGKPDD) is RNA binding. Asp-267 functions as the Nucleophile in the catalytic mechanism. Zn(2+) is bound by residues Cys-305, Cys-307, Cys-310, and His-336.

It belongs to the queuine tRNA-ribosyltransferase family. Homodimer. Within each dimer, one monomer is responsible for RNA recognition and catalysis, while the other monomer binds to the replacement base PreQ1. Zn(2+) is required as a cofactor.

The enzyme catalyses 7-aminomethyl-7-carbaguanine + guanosine(34) in tRNA = 7-aminomethyl-7-carbaguanosine(34) in tRNA + guanine. Its pathway is tRNA modification; tRNA-queuosine biosynthesis. Its function is as follows. Catalyzes the base-exchange of a guanine (G) residue with the queuine precursor 7-aminomethyl-7-deazaguanine (PreQ1) at position 34 (anticodon wobble position) in tRNAs with GU(N) anticodons (tRNA-Asp, -Asn, -His and -Tyr). Catalysis occurs through a double-displacement mechanism. The nucleophile active site attacks the C1' of nucleotide 34 to detach the guanine base from the RNA, forming a covalent enzyme-RNA intermediate. The proton acceptor active site deprotonates the incoming PreQ1, allowing a nucleophilic attack on the C1' of the ribose to form the product. After dissociation, two additional enzymatic reactions on the tRNA convert PreQ1 to queuine (Q), resulting in the hypermodified nucleoside queuosine (7-(((4,5-cis-dihydroxy-2-cyclopenten-1-yl)amino)methyl)-7-deazaguanosine). The polypeptide is Queuine tRNA-ribosyltransferase (Cereibacter sphaeroides (strain ATCC 17029 / ATH 2.4.9) (Rhodobacter sphaeroides)).